The sequence spans 305 residues: Serine/threonine-protein phosphatase ppe1 (305 aa).

Residues Asp51, His53, Asp79, and Asn111 each coordinate Mn(2+). His112 functions as the Proton donor in the catalytic mechanism. Residues His161 and His235 each contribute to the Mn(2+) site.

The protein belongs to the PPP phosphatase family. PP-6 (PP-V) subfamily. In terms of assembly, interacts with sts5, ekc1 and mis12. The cofactor is Mn(2+).

Its subcellular location is the nucleus. It carries out the reaction O-phospho-L-seryl-[protein] + H2O = L-seryl-[protein] + phosphate. The catalysed reaction is O-phospho-L-threonyl-[protein] + H2O = L-threonyl-[protein] + phosphate. Its function is as follows. Has a role in chromosome segregation. May provide a dynamic connection between kinetochore microtubules and kinetochore chromatin. Negatively regulates mis12. This is Serine/threonine-protein phosphatase ppe1 (ppe1) from Schizosaccharomyces pombe (strain 972 / ATCC 24843) (Fission yeast).